A 244-amino-acid chain; its full sequence is Mediator of RNA polymerase II transcription subunit 19 (244 aa).

Disordered regions lie at residues 1–67 (MENF…PFYL) and 171–244 (PKKK…SSLR). A compositionally biased stretch (pro residues) spans 26 to 38 (GKPPPPPPPPPGG). The segment covering 44 to 55 (PPSTATSAPAGA) has biased composition (low complexity). Over residues 171 to 182 (PKKKNKHKHKQS) the composition is skewed to basic residues. At serine 194 the chain carries Phosphoserine. Residues 212 to 224 (KRKKKEKKKKKNR) show a composition bias toward basic residues. Serine 226 is modified (phosphoserine). Residues 234–244 (SSQASSSSSLR) show a composition bias toward low complexity.

It belongs to the Mediator complex subunit 19 family. In terms of assembly, component of the Mediator complex, which is composed of MED1, MED4, MED6, MED7, MED8, MED9, MED10, MED11, MED12, MED13, MED13L, MED14, MED15, MED16, MED17, MED18, MED19, MED20, MED21, MED22, MED23, MED24, MED25, MED26, MED27, MED29, MED30, MED31, CCNC, CDK8 and CDC2L6/CDK11. The MED12, MED13, CCNC and CDK8 subunits form a distinct module termed the CDK8 module. Mediator containing the CDK8 module is less active than Mediator lacking this module in supporting transcriptional activation. Individual preparations of the Mediator complex lacking one or more distinct subunits have been variously termed ARC, CRSP, DRIP, PC2, SMCC and TRAP.

It is found in the nucleus. In terms of biological role, component of the Mediator complex, a coactivator involved in the regulated transcription of nearly all RNA polymerase II-dependent genes. Mediator functions as a bridge to convey information from gene-specific regulatory proteins to the basal RNA polymerase II transcription machinery. Mediator is recruited to promoters by direct interactions with regulatory proteins and serves as a scaffold for the assembly of a functional preinitiation complex with RNA polymerase II and the general transcription factors. The protein is Mediator of RNA polymerase II transcription subunit 19 (Med19) of Mus musculus (Mouse).